Reading from the N-terminus, the 309-residue chain is NAD kinase (309 aa).

Asp-89 acts as the Proton acceptor in catalysis. Residues 89 to 90 (DG), 163 to 164 (NE), His-174, Arg-191, Asp-193, and 204 to 209 (TAYSLS) contribute to the NAD(+) site.

It belongs to the NAD kinase family. A divalent metal cation is required as a cofactor.

It localises to the cytoplasm. It carries out the reaction NAD(+) + ATP = ADP + NADP(+) + H(+). Its function is as follows. Involved in the regulation of the intracellular balance of NAD and NADP, and is a key enzyme in the biosynthesis of NADP. Catalyzes specifically the phosphorylation on 2'-hydroxyl of the adenosine moiety of NAD to yield NADP. In Shewanella frigidimarina (strain NCIMB 400), this protein is NAD kinase.